The chain runs to 109 residues: Thiosulfate sulfurtransferase GlpE (109 aa).

Positions 17–105 constitute a Rhodanese domain; it reads KEGKTALVDI…WARSYPQDIT (89 aa). C65 acts as the Cysteine persulfide intermediate in catalysis.

Belongs to the GlpE family.

Its subcellular location is the cytoplasm. It catalyses the reaction thiosulfate + hydrogen cyanide = thiocyanate + sulfite + 2 H(+). The catalysed reaction is thiosulfate + [thioredoxin]-dithiol = [thioredoxin]-disulfide + hydrogen sulfide + sulfite + 2 H(+). In terms of biological role, transferase that catalyzes the transfer of sulfur from thiosulfate to thiophilic acceptors such as cyanide or dithiols. May function in a CysM-independent thiosulfate assimilation pathway by catalyzing the conversion of thiosulfate to sulfite, which can then be used for L-cysteine biosynthesis. The chain is Thiosulfate sulfurtransferase GlpE from Yersinia pestis.